The primary structure comprises 555 residues: CCR4-NOT transcription complex subunit 6-like (555 aa).

The tract at residues 1–152 (MRLIGMPKEK…NLYQDPDGTR (152 aa)) is required for interaction with CNOT1, CNOT3 and CNOT7. LRR repeat units follow at residues 57–78 (HLTA…IAKL), 80–101 (NLVY…LGNM), 103–125 (SLRE…GRLF), and 126–148 (QLQT…YQDP). The segment at 158 to 555 (MLDNLAVHPE…VNGVHLPNRR (398 aa)) is nuclease domain. A Mg(2+)-binding site is contributed by glutamate 240. Glutamate 240, glutamate 276, histidine 360, and proline 365 together coordinate substrate. Position 410 (aspartate 410) interacts with Mg(2+). Aspartate 410 functions as the Proton donor/acceptor in the catalytic mechanism. 3 residues coordinate substrate: asparagine 412, asparagine 479, and phenylalanine 484.

The protein belongs to the CCR4/nocturin family. In terms of assembly, component of the CCR4-NOT complex; distinct complexes seem to exist that differ in the participation of probably mutually exclusive catalytic subunits; the complex contains two deadenylase subunits, CNOT6 or CNOT6L, and CNOT7 or CNOT8. Interacts with CNOT1, CNOT3, CNOT7, CNOT8 and CNOT9. Interacts with TOB1. Interacts with NANOS2. Interacts with ZFP36. Interacts with ZFP36L2. Interacts with RBM46. It depends on Mg(2+) as a cofactor. In terms of tissue distribution, highly expressed in placenta, skeletal muscle, pancreas, testis and leukocytes. Weakly expressed in heart, spleen and thymus.

The protein resides in the cytoplasm. It is found in the nucleus. The catalysed reaction is Exonucleolytic cleavage of poly(A) to 5'-AMP.. Inhibited by free AMP, and with lesser efficiency also by CMP, GMP, UMP, ATP and neomycin. Functionally, has 3'-5' poly(A) exoribonuclease activity for synthetic poly(A) RNA substrate. Catalytic component of the CCR4-NOT complex which is one of the major cellular mRNA deadenylases and is linked to various cellular processes including bulk mRNA degradation, miRNA-mediated repression, translational repression during translational initiation and general transcription regulation. Additional complex functions may be a consequence of its influence on mRNA expression. May be involved in the deadenylation-dependent degradation of mRNAs through the 3'-UTR AU-rich element-mediated mechanism. Involved in deadenylation-dependent degradation of CDKN1B mRNA. Its mRNA deadenylase activity can be inhibited by TOB1. Mediates cell proliferation and cell survival and prevents cellular senescence. This Homo sapiens (Human) protein is CCR4-NOT transcription complex subunit 6-like (CNOT6L).